A 360-amino-acid chain; its full sequence is Iron uptake protein A1 (360 aa).

Residues 1 to 28 form the signal peptide; the sequence is MVQKLSRRLFLSIGTAFTVVVGSQLLSS. A lipid anchor (N-palmitoyl cysteine) is attached at C29. Residue C29 is the site of S-diacylglycerol cysteine attachment. Fe cation contacts are provided by H54, Y55, Y185, Y241, and Y242.

This sequence belongs to the bacterial solute-binding protein 1 family.

The protein resides in the cellular thylakoid membrane. It localises to the cell membrane. Functionally, plays an important role in protecting the acceptor side of photosystem II (PSII) against oxidative damage, especially under iron-limiting growth conditions. The differing subcellular locations of futA1 (predominantly thylakoid lumen) and futA2 (predominantly periplasmic) suggest they may fulfill different roles. Its function is as follows. A major iron-binding protein involved in Fe(3+) uptake, probably part of a periplasmic ABC transporter complex futA1A2BC (TC 3.A.1.10.2) involved in Fe(3+) ion import (ferric iron). This protein and futA2 (slr0531) may be subunit proteins that have redundant or overlapping substrate-binding functions. This chain is Iron uptake protein A1 (futA1), found in Synechocystis sp. (strain ATCC 27184 / PCC 6803 / Kazusa).